A 196-amino-acid polypeptide reads, in one-letter code: Pyridoxal 5'-phosphate synthase subunit PdxT (196 aa).

47-49 (GES) contributes to the L-glutamine binding site. Residue cysteine 79 is the Nucleophile of the active site. L-glutamine-binding positions include arginine 106 and 134 to 135 (IR). Residues histidine 170 and glutamate 172 each act as charge relay system in the active site.

The protein belongs to the glutaminase PdxT/SNO family. As to quaternary structure, in the presence of PdxS, forms a dodecamer of heterodimers. Only shows activity in the heterodimer.

It catalyses the reaction aldehydo-D-ribose 5-phosphate + D-glyceraldehyde 3-phosphate + L-glutamine = pyridoxal 5'-phosphate + L-glutamate + phosphate + 3 H2O + H(+). The enzyme catalyses L-glutamine + H2O = L-glutamate + NH4(+). The protein operates within cofactor biosynthesis; pyridoxal 5'-phosphate biosynthesis. In terms of biological role, catalyzes the hydrolysis of glutamine to glutamate and ammonia as part of the biosynthesis of pyridoxal 5'-phosphate. The resulting ammonia molecule is channeled to the active site of PdxS. The polypeptide is Pyridoxal 5'-phosphate synthase subunit PdxT (Bacillus cereus (strain Q1)).